Reading from the N-terminus, the 317-residue chain is Apolipoprotein E (317 aa).

The first 18 residues, 1 to 18, serve as a signal peptide directing secretion; it reads MKVLWAALLVTFLAGCQA. A run of 8 repeats spans residues 80-101, 102-123, 124-145, 146-167, 168-189, 190-211, 212-233, and 234-255. The 8 X 22 AA approximate tandem repeats stretch occupies residues 80-255; that stretch reads TLMDETMKEL…RLDEVKEQVA (176 aa). Met143 carries the post-translational modification Methionine sulfoxide. Ser147 bears the Phosphoserine mark. Positions 158-168 are LDL and other lipoprotein receptors binding; it reads HLRKLRKRLLR. Heparin is bound at residue 162–165; that stretch reads LRKR. Positions 210 to 290 are lipid-binding and lipoprotein association; the sequence is AATVGSLASQ…SWFEPLVEDM (81 aa). 229-236 contributes to the heparin binding site; the sequence is GERLRARM. The segment at 266-317 is homooligomerization; it reads QQISLQAEAFQARLKSWFEPLVEDMQRQWAGLVEKVQAAVGASTAPVPSDNH. The specificity for association with VLDL stretch occupies residues 278–290; the sequence is RLKSWFEPLVEDM.

Belongs to the apolipoprotein A1/A4/E family. In terms of assembly, homotetramer. May interact with ABCA1; functionally associated with ABCA1 in the biogenesis of HDLs. May interact with APP/A4 amyloid-beta peptide; the interaction is extremely stable in vitro but its physiological significance is unclear. May interact with MAPT. May interact with MAP2. In the cerebrospinal fluid, interacts with secreted SORL1. Interacts with PMEL; this allows the loading of PMEL luminal fragment on ILVs to induce fibril nucleation. APOE exists as multiple glycosylated and sialylated glycoforms within cells and in plasma. The extent of glycosylation and sialylation are tissue and context specific. Post-translationally, glycated in plasma VLDL. In terms of processing, phosphorylated by FAM20C in the extracellular medium.

It is found in the secreted. The protein localises to the extracellular space. Its subcellular location is the extracellular matrix. It localises to the extracellular vesicle. The protein resides in the endosome. It is found in the multivesicular body. Its function is as follows. APOE is an apolipoprotein, a protein associating with lipid particles, that mainly functions in lipoprotein-mediated lipid transport between organs via the plasma and interstitial fluids. APOE is a core component of plasma lipoproteins and is involved in their production, conversion and clearance. Apolipoproteins are amphipathic molecules that interact both with lipids of the lipoprotein particle core and the aqueous environment of the plasma. As such, APOE associates with chylomicrons, chylomicron remnants, very low density lipoproteins (VLDL) and intermediate density lipoproteins (IDL) but shows a preferential binding to high-density lipoproteins (HDL). It also binds a wide range of cellular receptors including the LDL receptor/LDLR, the LDL receptor-related proteins LRP1, LRP2 and LRP8 and the very low-density lipoprotein receptor/VLDLR that mediate the cellular uptake of the APOE-containing lipoprotein particles. Finally, APOE also has a heparin-binding activity and binds heparan-sulfate proteoglycans on the surface of cells, a property that supports the capture and the receptor-mediated uptake of APOE-containing lipoproteins by cells. A main function of APOE is to mediate lipoprotein clearance through the uptake of chylomicrons, VLDLs, and HDLs by hepatocytes. APOE is also involved in the biosynthesis by the liver of VLDLs as well as their uptake by peripheral tissues ensuring the delivery of triglycerides and energy storage in muscle, heart and adipose tissues. By participating in the lipoprotein-mediated distribution of lipids among tissues, APOE plays a critical role in plasma and tissues lipid homeostasis. APOE is also involved in two steps of reverse cholesterol transport, the HDLs-mediated transport of cholesterol from peripheral tissues to the liver, and thereby plays an important role in cholesterol homeostasis. First, it is functionally associated with ABCA1 in the biogenesis of HDLs in tissues. Second, it is enriched in circulating HDLs and mediates their uptake by hepatocytes. APOE also plays an important role in lipid transport in the central nervous system, regulating neuron survival and sprouting. This chain is Apolipoprotein E (APOE), found in Theropithecus gelada (Gelada baboon).